Consider the following 201-residue polypeptide: dTTP/UTP pyrophosphatase (201 aa).

Aspartate 75 functions as the Proton acceptor in the catalytic mechanism.

The protein belongs to the Maf family. YhdE subfamily. A divalent metal cation is required as a cofactor.

The protein resides in the cytoplasm. It carries out the reaction dTTP + H2O = dTMP + diphosphate + H(+). It catalyses the reaction UTP + H2O = UMP + diphosphate + H(+). Functionally, nucleoside triphosphate pyrophosphatase that hydrolyzes dTTP and UTP. May have a dual role in cell division arrest and in preventing the incorporation of modified nucleotides into cellular nucleic acids. The protein is dTTP/UTP pyrophosphatase of Pseudomonas fluorescens (strain ATCC BAA-477 / NRRL B-23932 / Pf-5).